A 303-amino-acid polypeptide reads, in one-letter code: E3 ubiquitin-protein ligase CCNB1IP1 homolog (303 aa).

An RING-type; degenerate zinc finger spans residues 3–42 (CNACWRELEGQAVSTTCGHLLCTEDAKKILSNDAACPICD). Positions 119–184 (LEEVHTAYQK…YESAKRSAIQ (66 aa)) form a coiled coil. Residues 201 to 268 (VPNIMDSSDP…DIRPRQPARP (68 aa)) form a disordered region.

As to quaternary structure, interacts with ZIP4 and PTD. Expressed in young panicles.

It localises to the nucleus. The protein resides in the chromosome. It catalyses the reaction S-ubiquitinyl-[E2 ubiquitin-conjugating enzyme]-L-cysteine + [acceptor protein]-L-lysine = [E2 ubiquitin-conjugating enzyme]-L-cysteine + N(6)-ubiquitinyl-[acceptor protein]-L-lysine.. It participates in protein modification; protein ubiquitination. Functionally, ubiquitin E3 ligase required for class I crossover (CO) formation during meiosis. This chain is E3 ubiquitin-protein ligase CCNB1IP1 homolog, found in Oryza sativa subsp. japonica (Rice).